The primary structure comprises 147 residues: DNA polymerase III subunit chi (147 aa).

This sequence belongs to the DNA polymerase III chi/HolC chain family. The DNA polymerase III holoenzyme complex contains at least 10 different subunits organized into 3 functionally essential subassemblies: the Pol III core, the beta sliding clamp processivity factor and the clamp-loading complex. The Pol III core (subunits alpha, epsilon and theta) contains the polymerase and the 3'-5' exonuclease proofreading activities. The polymerase is tethered to the template via the dimeric beta sliding clamp processivity factor. The clamp-loading complex (also called gamma complex) assembles the beta sliding clamp onto the primed template and plays a central role in the organization and communication at the replication fork. The clamp-loading complex contains delta, delta', psi and chi, and 3 copies of either or both of two different DnaX proteins, gamma and tau. The DNA replisome complex has a single clamp loader (3 tau and 1 each of delta, delta', psi and chi subunits) which binds 3 Pol III cores (1 core on the leading strand and 2 on the lagging strand) each with a beta sliding clamp dimer. Additional proteins in the replisome are other copies of gamma, psi (holD) and chi (this protein), SSB, DNA helicase and RNA primase. The clamp loader hydrolyzes ATP to assemble the beta processivity factor onto the primed template and plays a central role in the organization and communication at the replication fork. The only subunit of the DNA polymerase III holoenzyme known to interact with single-stranded DNA binding protein (SSB). Interacts directly with the psi subunit (holD). Interacts directly with DNA helicase YoaA. It binds to HolD and YoaA, but not both simultaneously.

It catalyses the reaction DNA(n) + a 2'-deoxyribonucleoside 5'-triphosphate = DNA(n+1) + diphosphate. In terms of biological role, part of the beta sliding clamp loading complex, which hydrolyzes ATP to load the beta clamp onto primed DNA to form the DNA replication pre-initiation complex. DNA polymerase III is a complex, multichain enzyme responsible for most of the replicative synthesis in bacteria. This DNA polymerase also exhibits 3' to 5' exonuclease activity. Genetically identified as involved in the repair of replication forks and tolerance of the chain-terminating nucleoside analog 3' AZT. This subunit may stabilize YoaA and/or stimulate the helicase activity of YoaA. This is DNA polymerase III subunit chi from Escherichia coli (strain K12).